Reading from the N-terminus, the 167-residue chain is NAD(P)H-quinone oxidoreductase subunit I, chloroplastic (167 aa).

2 consecutive 4Fe-4S ferredoxin-type domains span residues 55–84 (GRIH…VDWK) and 95–124 (LNYS…MTEE). Residues Cys64, Cys67, Cys70, Cys74, Cys104, Cys107, Cys110, and Cys114 each contribute to the [4Fe-4S] cluster site.

This sequence belongs to the complex I 23 kDa subunit family. In terms of assembly, NDH is composed of at least 16 different subunits, 5 of which are encoded in the nucleus. [4Fe-4S] cluster serves as cofactor.

It localises to the plastid. The protein localises to the chloroplast thylakoid membrane. It catalyses the reaction a plastoquinone + NADH + (n+1) H(+)(in) = a plastoquinol + NAD(+) + n H(+)(out). It carries out the reaction a plastoquinone + NADPH + (n+1) H(+)(in) = a plastoquinol + NADP(+) + n H(+)(out). Functionally, NDH shuttles electrons from NAD(P)H:plastoquinone, via FMN and iron-sulfur (Fe-S) centers, to quinones in the photosynthetic chain and possibly in a chloroplast respiratory chain. The immediate electron acceptor for the enzyme in this species is believed to be plastoquinone. Couples the redox reaction to proton translocation, and thus conserves the redox energy in a proton gradient. The protein is NAD(P)H-quinone oxidoreductase subunit I, chloroplastic of Citrus sinensis (Sweet orange).